Consider the following 461-residue polypeptide: Bifunctional protein GlmU (461 aa).

The interval 1-229 is pyrophosphorylase; it reads MNKYVVILAA…FSESLGVNDR (229 aa). UDP-N-acetyl-alpha-D-glucosamine is bound by residues 8–11, Lys-22, Gln-72, and 77–78; these read LAAG and GT. Asp-102 contacts Mg(2+). UDP-N-acetyl-alpha-D-glucosamine is bound by residues Gly-139, Glu-154, Asn-169, and Asn-227. Mg(2+) is bound at residue Asn-227. Residues 230–250 form a linker region; the sequence is IALAQATKIMQRRINEEHMRN. Residues 251-461 are N-acetyltransferase; sequence GVSFIDPDTA…LPLAKDKEWE (211 aa). The UDP-N-acetyl-alpha-D-glucosamine site is built by Arg-332 and Lys-350. The active-site Proton acceptor is His-362. Tyr-365 and Asn-376 together coordinate UDP-N-acetyl-alpha-D-glucosamine. Residues 385-386, Ala-422, and Arg-439 each bind acetyl-CoA; that span reads NY.

In the N-terminal section; belongs to the N-acetylglucosamine-1-phosphate uridyltransferase family. This sequence in the C-terminal section; belongs to the transferase hexapeptide repeat family. In terms of assembly, homotrimer. Requires Mg(2+) as cofactor.

The protein resides in the cytoplasm. It carries out the reaction alpha-D-glucosamine 1-phosphate + acetyl-CoA = N-acetyl-alpha-D-glucosamine 1-phosphate + CoA + H(+). It catalyses the reaction N-acetyl-alpha-D-glucosamine 1-phosphate + UTP + H(+) = UDP-N-acetyl-alpha-D-glucosamine + diphosphate. Its pathway is nucleotide-sugar biosynthesis; UDP-N-acetyl-alpha-D-glucosamine biosynthesis; N-acetyl-alpha-D-glucosamine 1-phosphate from alpha-D-glucosamine 6-phosphate (route II): step 2/2. It participates in nucleotide-sugar biosynthesis; UDP-N-acetyl-alpha-D-glucosamine biosynthesis; UDP-N-acetyl-alpha-D-glucosamine from N-acetyl-alpha-D-glucosamine 1-phosphate: step 1/1. It functions in the pathway bacterial outer membrane biogenesis; LPS lipid A biosynthesis. Catalyzes the last two sequential reactions in the de novo biosynthetic pathway for UDP-N-acetylglucosamine (UDP-GlcNAc). The C-terminal domain catalyzes the transfer of acetyl group from acetyl coenzyme A to glucosamine-1-phosphate (GlcN-1-P) to produce N-acetylglucosamine-1-phosphate (GlcNAc-1-P), which is converted into UDP-GlcNAc by the transfer of uridine 5-monophosphate (from uridine 5-triphosphate), a reaction catalyzed by the N-terminal domain. In Lactobacillus johnsonii (strain CNCM I-12250 / La1 / NCC 533), this protein is Bifunctional protein GlmU.